The following is a 177-amino-acid chain: Putative fimbrin-like protein FimI (177 aa).

An N-terminal signal peptide occupies residues 1-19 (MIRKGAALVGLVLMSPVIA). Residues Cys-40 and Cys-81 are joined by a disulfide bond.

It belongs to the fimbrial protein family.

The protein localises to the fimbrium. This chain is Putative fimbrin-like protein FimI (fimI), found in Salmonella typhi.